The following is a 226-amino-acid chain: Small ribosomal subunit protein uS3 (226 aa).

The KH type-2 domain occupies 36-104 (IRKYLENRLS…KIQINIFEIK (69 aa)).

The protein belongs to the universal ribosomal protein uS3 family. In terms of assembly, part of the 30S ribosomal subunit. Forms a tight complex with proteins S10 and S14.

Binds the lower part of the 30S subunit head. Binds mRNA in the 70S ribosome, positioning it for translation. The polypeptide is Small ribosomal subunit protein uS3 (Karelsulcia muelleri (strain GWSS) (Sulcia muelleri)).